Reading from the N-terminus, the 1104-residue chain is Lon protease homolog, mitochondrial (1104 aa).

A mitochondrion-targeting transit peptide spans 1–58 (MLPLRAFARLAQRPRLSRPTQLARSSLPRPSPSRPAAHYLALAPAPSTRFLHSSPPVL). Disordered stretches follow at residues 8–144 (ARLA…KEVA) and 275–295 (EGSQ…SEVP). Over residues 22 to 46 (LARSSLPRPSPSRPAAHYLALAPAP) the composition is skewed to low complexity. Over residues 80–103 (KQDDQVEKPLPDAESSKSAEERAK) the composition is skewed to basic and acidic residues. The span at 104–128 (SQSSKPDIKASSSDSVSSSAPAPGS) shows a compositional bias: low complexity. Over residues 129 to 139 (ADGGSPPGAGG) the composition is skewed to gly residues. Positions 155-444 (VLAIPITHRP…RALVLLKKEL (290 aa)) constitute a Lon N-terminal domain. Residues 281–291 (AKGEGEVKSFE) are compositionally biased toward basic and acidic residues. Position 597–604 (597–604 (GPPGVGKT)) interacts with ATP. The 188-residue stretch at 895-1082 (SPPAGVSTGL…RQVLHEAFRG (188 aa)) folds into the Lon proteolytic domain. Residues S987 and K1030 contribute to the active site.

Belongs to the peptidase S16 family. In terms of assembly, homohexamer or homoheptamer. Organized in a ring with a central cavity.

The protein localises to the mitochondrion matrix. The enzyme catalyses Hydrolysis of proteins in presence of ATP.. Functionally, ATP-dependent serine protease that mediates the selective degradation of misfolded, unassembled or oxidatively damaged polypeptides as well as certain short-lived regulatory proteins in the mitochondrial matrix. May also have a chaperone function in the assembly of inner membrane protein complexes. Participates in the regulation of mitochondrial gene expression and in the maintenance of the integrity of the mitochondrial genome. Binds to mitochondrial DNA in a site-specific manner. The sequence is that of Lon protease homolog, mitochondrial from Cryptococcus neoformans var. neoformans serotype D (strain JEC21 / ATCC MYA-565) (Filobasidiella neoformans).